Reading from the N-terminus, the 85-residue chain is Large ribosomal subunit protein bL27 (85 aa).

The interval 1–22 (MAHKKAGGSTRNGRDSESKRLG) is disordered.

Belongs to the bacterial ribosomal protein bL27 family.

The protein is Large ribosomal subunit protein bL27 of Aliivibrio salmonicida (strain LFI1238) (Vibrio salmonicida (strain LFI1238)).